The chain runs to 651 residues: ATP synthase F(1) complex catalytic subunit beta, mitochondrial (651 aa).

The N-terminal 30 residues, 1 to 30 (MFVARRLSKNITQISKTAVKTSVRAVPVRG), are a transit peptide targeting the mitochondrion. Gly-259, Val-260, Gly-261, Lys-262, Thr-263, and Val-264 together coordinate ADP. ATP is bound at residue Gly-259. Residues Gly-259, Val-260, Gly-261, Lys-262, and Thr-263 each coordinate phosphate. The ATP site is built by Gly-261, Lys-262, Thr-263, and Val-264. Thr-263 contacts Mg(2+). Residue Glu-288 participates in Mg(2+) binding. Arg-289 is an ATP binding site.

It belongs to the ATPase alpha/beta chains family. In terms of assembly, homotrimer. Component of the ATP synthase complex composed at least of ATP5F1A/subunit alpha, ATP5F1B/subunit beta, ATP5MC1/subunit c (homooctomer), MT-ATP6/subunit a, MT-ATP8/subunit 8, ATP5ME/subunit e, ATP5MF/subunit f, ATP5MG/subunit g, ATP5MK/subunit k, ATP5MJ/subunit j, ATP5F1C/subunit gamma, ATP5F1D/subunit delta, ATP5F1E/subunit epsilon, ATP5PF/subunit F6, ATP5PB/subunit b, ATP5PD/subunit d, ATP5PO/subunit OSCP. ATP synthase complex consists of a soluble F(1) head domain (subunits alpha(3) and beta(3)) - the catalytic core - and a membrane F(0) domain - the membrane proton channel (subunits c, a, 8, e, f, g, k and j). These two domains are linked by a central stalk (subunits gamma, delta, and epsilon) rotating inside the F1 region and a stationary peripheral stalk (subunits F6, b, d, and OSCP).

The protein resides in the mitochondrion inner membrane. It carries out the reaction ATP + H2O + 4 H(+)(in) = ADP + phosphate + 5 H(+)(out). Its function is as follows. Catalytic subunit beta, of the mitochondrial membrane ATP synthase complex (F(1)F(0) ATP synthase or Complex V) that produces ATP from ADP in the presence of a proton gradient across the membrane which is generated by electron transport complexes of the respiratory chain. ATP synthase complex consist of a soluble F(1) head domain - the catalytic core - and a membrane F(1) domain - the membrane proton channel. These two domains are linked by a central stalk rotating inside the F(1) region and a stationary peripheral stalk. During catalysis, ATP synthesis in the catalytic domain of F(1) is coupled via a rotary mechanism of the central stalk subunits to proton translocation. In vivo, can only synthesize ATP although its ATP hydrolase activity can be activated artificially in vitro. With the subunit alpha (ATP5F1A), forms the catalytic core in the F(1) domain. The sequence is that of ATP synthase F(1) complex catalytic subunit beta, mitochondrial from Dictyostelium discoideum (Social amoeba).